Here is a 405-residue protein sequence, read N- to C-terminus: Probable succinyl-diaminopimelate desuccinylase (405 aa).

Histidine 72 is a binding site for Zn(2+). The active site involves aspartate 74. Position 105 (aspartate 105) interacts with Zn(2+). The active-site Proton acceptor is the glutamate 139. 3 residues coordinate Zn(2+): glutamate 140, glutamate 165, and histidine 377.

This sequence belongs to the peptidase M20A family. Zn(2+) is required as a cofactor. Requires Co(2+) as cofactor.

The catalysed reaction is N-succinyl-(2S,6S)-2,6-diaminopimelate + H2O = (2S,6S)-2,6-diaminopimelate + succinate. It functions in the pathway amino-acid biosynthesis; L-lysine biosynthesis via DAP pathway; LL-2,6-diaminopimelate from (S)-tetrahydrodipicolinate (succinylase route): step 3/3. The protein is Probable succinyl-diaminopimelate desuccinylase (dapE) of Staphylococcus epidermidis (strain ATCC 35984 / DSM 28319 / BCRC 17069 / CCUG 31568 / BM 3577 / RP62A).